Consider the following 229-residue polypeptide: Cell division topological specificity factor homolog, chloroplastic (229 aa).

A chloroplast-targeting transit peptide spans 1–30 (MAMSSGTLRISATLVSPYHHHHRNRLSLPS). The segment at 35 to 141 (VDFTGFISNG…KMILFSDRCD (107 aa)) is interaction with MIND1. Residues 142-169 (VSDEAKRKIVNNIIHALSDFVEIESEEK) are homodimerization.

This sequence belongs to the MinE family. As to quaternary structure, homodimer. Interacts with MIND1. These interactions are required for proper intraplastidic localization. Binds to ARC3. Expressed in green tissues, especially at the shoot apex. Also present in leaves, stems, buds, and flowers, especially in sepals, siliques (tip and base), and anthers (mostly in pollen grains).

It is found in the plastid. The protein localises to the chloroplast. In terms of biological role, acts as a topological specificity factor during plastid division and specify plastid constriction sites (such as the Z-ring) in a MCD1-dependent manner. Especially involved in epidermal plastids division in a FTSZ1-dependent manner. Required for the proper formation of FtsZ rings at the division site in nongreen plastids (e.g. etioplasts). May contribute to gravitropism in stems and hypocotyls. Stimulates MIND1 ATPase activity. In cooperation with MIND1, prevents FtsZ ring formation anywhere outside of the mid-plastids. The protein is Cell division topological specificity factor homolog, chloroplastic of Arabidopsis thaliana (Mouse-ear cress).